A 438-amino-acid chain; its full sequence is uncharacterized protein (438 aa).

Residue His-59 coordinates Zn(2+). Glu-62 functions as the Proton acceptor in the catalytic mechanism. 2 residues coordinate Zn(2+): His-63 and Glu-139.

The protein belongs to the peptidase M16 family. The cofactor is Zn(2+).

This is an uncharacterized protein from Mycobacterium bovis (strain ATCC BAA-935 / AF2122/97).